The following is a 1194-amino-acid chain: Protein argonaute 3 (1194 aa).

A compositionally biased stretch (basic and acidic residues) spans 1 to 98 (MDRGGYRGGR…GRGGGGDRGR (98 aa)). Disordered regions lie at residues 1-277 (MDRG…VSQS) and 299-341 (TVLP…DKGG). Residues 142–158 (PPSSSQAQVSQGVAPGD) are compositionally biased toward low complexity. The segment covering 167-180 (VGRDGVGDVGRDGV) has biased composition (basic and acidic residues). The segment covering 181 to 214 (GDVGQGGVGDVGQVGVGDVGQGGVGDVGQGGVGD) has biased composition (gly residues). Positions 215-228 (VGRDGVGDVGRDGV) are enriched in basic and acidic residues. A compositionally biased stretch (gly residues) spans 229–238 (GDVGRGGVGD). Composition is skewed to low complexity over residues 256-277 (QLQQ…VSQS) and 299-316 (TVLP…HTAS). The segment covering 317–326 (GSQVMTPKPS) has biased composition (polar residues). A compositionally biased stretch (basic and acidic residues) spans 327–341 (SSDKKEPVKRPDKGG). The region spanning 540 to 656 (SVIEYLKLYF…VPMEFCNLVE (117 aa)) is the PAZ domain. The Piwi domain occupies 841–1145 (LVLCAMTGKH…AASRGRVYYE (305 aa)).

Belongs to the argonaute family. Ago subfamily.

In terms of biological role, involved in RNA-mediated post-transcriptional gene silencing (PTGS). Main component of the RNA-induced silencing complex (RISC) that binds to a short guide RNA such as a microRNA (miRNA) or small interfering RNA (siRNA). RISC uses the mature miRNA or siRNA as a guide for slicer-directed cleavage of homologous mRNAs to repress gene expression. This is Protein argonaute 3 (AGO3) from Arabidopsis thaliana (Mouse-ear cress).